The chain runs to 75 residues: Phi-liotoxin-Lw1a (75 aa).

The signal sequence occupies residues 1–25 (MNFATKVSLLLLAIAVIVIVEGGEG). A propeptide spanning residues 26–39 (DSWFEEHEESDTER) is cleaved from the precursor. 2 cysteine pairs are disulfide-bonded: Cys-50-Cys-62 and Cys-56-Cys-68.

In terms of tissue distribution, expressed by the venom gland.

Its subcellular location is the secreted. Its function is as follows. Affects the activity of both ryanodine-sensitive calcium-release channels RyR1 and RyR2 with high potency. At lower concentrations the toxin increases full openings of the RyRs, and at higher concentrations it inhibits full openings and induce openings to subconductance levels and reduces the number of full conductance openings. The different actions may be attributed to the toxins binding at different sites on the RyRs, with binding at a high-affinity site mediating the increase in full openings and the induction of subconductance states evoked upon binding to a lower-affinity site. Insect-selective toxin that provokes a dose-dependent contractile paralysis in crickets and blowfly larvae, followed by death. The sequence is that of Phi-liotoxin-Lw1a from Hormurus waigiensis (Australian rainforest scorpion).